Consider the following 290-residue polypeptide: MKRTPHLLAIQSHVVFGHAGNSAAVFPMQRIGVNAWPLNTVQFSNHTQYGQWAGEVLAPAQIPALVEGISNIGELGHCDAVLSGYLGSAEQGRAILAGVERIKAVNPKALYLCDPVMGHPEKGCIVPPEVSEFLLDEAAATADILCPNQLELDSFCGRRAQSLEDCVNMARSLLQRGPQVVLVKHLAYPGRAEEHFEMLLVTAEHSWHLRRPLLAFPRQPVGVGDLTSGLFLARVLLGDSWVQAFEFTAAAVHEVLLETQACASYELQLVRAQDRIAHPRVRFEAQLLAL.

Residues Ser12 and 47 to 48 (TQ) each bind substrate. Residues Asp114, Glu151, Lys184, and 211–214 (RPLL) contribute to the ATP site. Asp225 serves as a coordination point for substrate.

It belongs to the pyridoxine kinase family. PdxY subfamily. As to quaternary structure, homodimer. Mg(2+) is required as a cofactor.

It catalyses the reaction pyridoxal + ATP = pyridoxal 5'-phosphate + ADP + H(+). It functions in the pathway cofactor metabolism; pyridoxal 5'-phosphate salvage; pyridoxal 5'-phosphate from pyridoxal: step 1/1. In terms of biological role, pyridoxal kinase involved in the salvage pathway of pyridoxal 5'-phosphate (PLP). Catalyzes the phosphorylation of pyridoxal to PLP. This is Pyridoxal kinase PdxY from Pseudomonas putida (strain ATCC 47054 / DSM 6125 / CFBP 8728 / NCIMB 11950 / KT2440).